The chain runs to 65 residues: Small ribosomal subunit protein eS27 (65 aa).

4 residues coordinate Zn(2+): Cys21, Cys24, Cys40, and Cys43. Residues 21-43 (CKDCGNVQVVFARPSSVVTCNIC) form a C4-type zinc finger.

This sequence belongs to the eukaryotic ribosomal protein eS27 family. As to quaternary structure, part of the 30S ribosomal subunit. Requires Zn(2+) as cofactor.

This Thermoplasma volcanium (strain ATCC 51530 / DSM 4299 / JCM 9571 / NBRC 15438 / GSS1) protein is Small ribosomal subunit protein eS27.